The sequence spans 509 residues: ATP synthase subunit alpha (509 aa).

Residue 169-176 participates in ATP binding; it reads GDRQTGKT.

It belongs to the ATPase alpha/beta chains family. In terms of assembly, F-type ATPases have 2 components, CF(1) - the catalytic core - and CF(0) - the membrane proton channel. CF(1) has five subunits: alpha(3), beta(3), gamma(1), delta(1), epsilon(1). CF(0) has four main subunits: a(1), b(1), b'(1) and c(9-12).

The protein resides in the cell inner membrane. The enzyme catalyses ATP + H2O + 4 H(+)(in) = ADP + phosphate + 5 H(+)(out). In terms of biological role, produces ATP from ADP in the presence of a proton gradient across the membrane. The alpha chain is a regulatory subunit. In Bradyrhizobium sp. (strain BTAi1 / ATCC BAA-1182), this protein is ATP synthase subunit alpha.